We begin with the raw amino-acid sequence, 1795 residues long: Protein TIC 214 (1795 aa).

6 helical membrane passes run 19–39 (IINS…FSIG), 68–88 (FIAG…HLAL), 91–111 (PHTI…WNNH), 133–153 (VFLN…SSML), 176–196 (VGWL…LVWI), and 227–247 (IFSI…PSPI). The interval 1490-1517 (EKESTGQVEFESDKEQQRNSESALSNQE) is disordered. Positions 1508–1517 (NSESALSNQE) are enriched in polar residues.

It belongs to the TIC214 family. Part of the Tic complex.

It is found in the plastid. The protein localises to the chloroplast inner membrane. Functionally, involved in protein precursor import into chloroplasts. May be part of an intermediate translocation complex acting as a protein-conducting channel at the inner envelope. The polypeptide is Protein TIC 214 (Crucihimalaya wallichii (Rock-cress)).